The chain runs to 360 residues: Variable large protein 14 (360 aa).

Residues 1–18 (MRKRISAIIMTLFMVLAS) form the signal peptide. Cysteine 19 carries N-palmitoyl cysteine lipidation. The S-diacylglycerol cysteine moiety is linked to residue cysteine 19.

The protein belongs to the variable large protein (Vlp) family. Beta subfamily.

It is found in the cell outer membrane. The Vlp and Vsp proteins are antigenically distinct proteins, only one vlp or vsp gene is transcriptionally active at any one time. Switching between these genes is a mechanism of host immune response evasion. The polypeptide is Variable large protein 14 (Borrelia hermsii).